Consider the following 637-residue polypeptide: Chloride intracellular channel protein 6 (637 aa).

Residues methionine 1–glutamine 400 are disordered. Positions glycine 35–alanine 63 are enriched in low complexity. Serine 39 bears the Phosphoserine mark. The segment covering cysteine 126 to glutamate 137 has biased composition (basic and acidic residues). Over residues glycine 138 to alanine 152 the composition is skewed to low complexity. 15 consecutive repeat copies span residues glycine 155–alanine 160, glutamate 161–alanine 166, glycine 167–alanine 172, alanine 173–alanine 178, glycine 179–alanine 184, glycine 185–alanine 190, glycine 191–alanine 196, glycine 197–threonine 202, glycine 203–alanine 208, alanine 209–alanine 214, glycine 215–threonine 220, glycine 221–alanine 226, glycine 227–alanine 232, glycine 233–alanine 238, and glycine 239–alanine 244. The interval glycine 155–alanine 244 is 15 X 6 AA tandem repeat of [GEA]-[DGR]-[SN]-[VIM]-D-[AT]. Gly residues predominate over residues proline 247–glycine 256. Acidic residues predominate over residues glycine 305–glycine 314. The segment covering aspartate 315 to proline 332 has biased composition (basic and acidic residues). 2 positions are modified to phosphoserine: serine 348 and serine 393. Positions cysteine 420–serine 423 match the G-site motif. A helical transmembrane segment spans residues phenylalanine 422 to valine 442. Residues aspartate 466–lysine 637 enclose the GST C-terminal domain.

This sequence belongs to the chloride channel CLIC family. Monomer (soluble state). Interacts with dopamine receptors DRD2, DRD3 and DRD4. Post-translationally, phosphorylated. Expressed in brain, chorioretinal, lacrimal glands, submandibular glands, airway epithelium, kidney and gastric mucosa, where it is preferentially expressed in cells that secrete or transport water. In brain, it is highly expressed in choroid plexus. Not detected in pancreas, adrenal glands, heart, skeletal muscle, ileal mucosa, liver and lung.

It is found in the cytoplasm. The protein resides in the cell membrane. It catalyses the reaction chloride(in) = chloride(out). Its activity is regulated as follows. Channel activity is redox- and pH-regulated. Inhibited by IAA-94. In terms of biological role, in the soluble state, catalyzes glutaredoxin-like thiol disulfide exchange reactions with reduced glutathione as electron donor. Can insert into membranes and form voltage-dependent chloride-selective channels. The channel opens upon membrane depolarization at positive voltages and closes at negative membrane voltages. May play a critical role in water-secreting cells, possibly through the regulation of chloride ion transport. This chain is Chloride intracellular channel protein 6 (CLIC6), found in Oryctolagus cuniculus (Rabbit).